A 420-amino-acid polypeptide reads, in one-letter code: Maturation protein A2 (420 aa).

RNA-binding stretches follow at residues 158-176, 226-236, and 294-298; these read IKYLGLLLRRLREGYRAVK, QNRHDKIQRLL, and PVSDW.

The protein belongs to the Leviviricetes maturation protein family. In terms of assembly, interacts with host MurA; this interaction inhibits the first step in host cell wall synthesis. Interacts with the capsid protein.

It localises to the virion. Its function is as follows. Induces host cell lysis. Inhibits host MurA activity thereby blocking the synthesis of murein precursors necessary for the host cell wall biosynthesis. May be responsible for the attachment to the host pilus. Makes extensive contacts with the viral genome. In Escherichia virus Qbeta (Bacteriophage Q-beta), this protein is Maturation protein A2.